Consider the following 217-residue polypeptide: Thiamine-phosphate synthase (217 aa).

4-amino-2-methyl-5-(diphosphooxymethyl)pyrimidine-binding positions include 44–48 (QYREK) and asparagine 76. The Mg(2+) site is built by aspartate 77 and aspartate 96. Residue serine 115 coordinates 4-amino-2-methyl-5-(diphosphooxymethyl)pyrimidine. Residue 141–143 (TKT) participates in 2-[(2R,5Z)-2-carboxy-4-methylthiazol-5(2H)-ylidene]ethyl phosphate binding. Lysine 144 is a 4-amino-2-methyl-5-(diphosphooxymethyl)pyrimidine binding site. 2-[(2R,5Z)-2-carboxy-4-methylthiazol-5(2H)-ylidene]ethyl phosphate-binding positions include glycine 172 and 192–193 (VS).

It belongs to the thiamine-phosphate synthase family. Mg(2+) serves as cofactor.

The enzyme catalyses 2-[(2R,5Z)-2-carboxy-4-methylthiazol-5(2H)-ylidene]ethyl phosphate + 4-amino-2-methyl-5-(diphosphooxymethyl)pyrimidine + 2 H(+) = thiamine phosphate + CO2 + diphosphate. It catalyses the reaction 2-(2-carboxy-4-methylthiazol-5-yl)ethyl phosphate + 4-amino-2-methyl-5-(diphosphooxymethyl)pyrimidine + 2 H(+) = thiamine phosphate + CO2 + diphosphate. The catalysed reaction is 4-methyl-5-(2-phosphooxyethyl)-thiazole + 4-amino-2-methyl-5-(diphosphooxymethyl)pyrimidine + H(+) = thiamine phosphate + diphosphate. It functions in the pathway cofactor biosynthesis; thiamine diphosphate biosynthesis; thiamine phosphate from 4-amino-2-methyl-5-diphosphomethylpyrimidine and 4-methyl-5-(2-phosphoethyl)-thiazole: step 1/1. Condenses 4-methyl-5-(beta-hydroxyethyl)thiazole monophosphate (THZ-P) and 2-methyl-4-amino-5-hydroxymethyl pyrimidine pyrophosphate (HMP-PP) to form thiamine monophosphate (TMP). The protein is Thiamine-phosphate synthase of Lawsonia intracellularis (strain PHE/MN1-00).